Here is a 502-residue protein sequence, read N- to C-terminus: Lysine--tRNA ligase (502 aa).

The segment at M1–R22 is disordered. Mg(2+)-binding residues include E413 and E420.

It belongs to the class-II aminoacyl-tRNA synthetase family. Homodimer. Requires Mg(2+) as cofactor.

The protein localises to the cytoplasm. The enzyme catalyses tRNA(Lys) + L-lysine + ATP = L-lysyl-tRNA(Lys) + AMP + diphosphate. The sequence is that of Lysine--tRNA ligase from Chromobacterium violaceum (strain ATCC 12472 / DSM 30191 / JCM 1249 / CCUG 213 / NBRC 12614 / NCIMB 9131 / NCTC 9757 / MK).